A 343-amino-acid polypeptide reads, in one-letter code: UDP-3-O-acylglucosamine N-acyltransferase 2 (343 aa).

His251 functions as the Proton acceptor in the catalytic mechanism.

It belongs to the transferase hexapeptide repeat family. LpxD subfamily. In terms of assembly, homotrimer.

The catalysed reaction is a UDP-3-O-[(3R)-3-hydroxyacyl]-alpha-D-glucosamine + a (3R)-hydroxyacyl-[ACP] = a UDP-2-N,3-O-bis[(3R)-3-hydroxyacyl]-alpha-D-glucosamine + holo-[ACP] + H(+). Its pathway is bacterial outer membrane biogenesis; LPS lipid A biosynthesis. Functionally, catalyzes the N-acylation of UDP-3-O-acylglucosamine using 3-hydroxyacyl-ACP as the acyl donor. Is involved in the biosynthesis of lipid A, a phosphorylated glycolipid that anchors the lipopolysaccharide to the outer membrane of the cell. In Legionella pneumophila subsp. pneumophila (strain Philadelphia 1 / ATCC 33152 / DSM 7513), this protein is UDP-3-O-acylglucosamine N-acyltransferase 2.